Here is a 377-residue protein sequence, read N- to C-terminus: Nitric oxide reductase FlRd-NAD(+) reductase (377 aa).

The protein belongs to the FAD-dependent oxidoreductase family. FAD serves as cofactor.

The protein resides in the cytoplasm. The catalysed reaction is 2 reduced [nitric oxide reductase rubredoxin domain] + NAD(+) + H(+) = 2 oxidized [nitric oxide reductase rubredoxin domain] + NADH. It functions in the pathway nitrogen metabolism; nitric oxide reduction. One of at least two accessory proteins for anaerobic nitric oxide (NO) reductase. Reduces the rubredoxin moiety of NO reductase. This chain is Nitric oxide reductase FlRd-NAD(+) reductase, found in Escherichia coli (strain K12 / MC4100 / BW2952).